The sequence spans 922 residues: Band 3 anion transport protein (922 aa).

2 disordered regions span residues 1 to 36 (MEGPGQDTEDALRRSLDPEGYEDTKGSRTSLGTMSN) and 355 to 389 (QHPDTVRSPGGPTAPKDTGDKGQAPQDDDPLLRTR). The Cytoplasmic segment spans residues 1–416 (MEGPGQDTED…LSDIRDALNP (416 aa)). Basic and acidic residues predominate over residues 10-26 (DALRRSLDPEGYEDTKG). The span at 27-36 (SRTSLGTMSN) shows a compositional bias: polar residues. A helical membrane pass occupies residues 417–440 (QCLAAVIFIYFAALSPAITFGGLL). Over 441–448 (GEKTRGMM) the chain is Extracellular. A helical transmembrane segment spans residues 449-469 (GVSELLLSTSVQCLLFSLLSA). The Cytoplasmic segment spans residues 470 to 472 (QPL). The discontinuously helical transmembrane segment at 473–489 (LVVGFSGPLLVFEEAFF) threads the bilayer. The Extracellular portion of the chain corresponds to 490-498 (RFCEDHGLE). The chain crosses the membrane as a helical span at residues 499–519 (YIVGRVWIGFWLILLVLLVVA). Topologically, residues 520-531 (CEGTVLVRYLSR) are cytoplasmic. Residues 532–554 (YTQEIFSFLISLIFIYETFAKLV) traverse the membrane as a helical segment. At 555–581 (TIFEAHPLQQSYDTDVSTEPSVPKPNT) the chain is on the extracellular side. Residues 582 to 602 (ALLSLVLMAGTFFLALFLRQF) form a helical membrane-spanning segment. Over 603-613 (KNSVFLPGKVR) the chain is Cytoplasmic. A helical transmembrane segment spans residues 614–634 (RLIGDFGVPISIFVMALADFF). Over 635 to 674 (IKDTYTQKLKVPRGLEVTNGTARGWFIHPMGSATPFPIWM) the chain is Extracellular. Asn653 carries an N-linked (GlcNAc...) asparagine glycan. Residues 675–695 (MFASPVPALLVFILIFLETQI) traverse the membrane as a helical segment. Residues 696–711 (TTLIVSKPERKLVKGS) are Cytoplasmic-facing. The helical transmembrane segment at 712–730 (GFHLDLLLIVAMGGLAALF) threads the bilayer. Residues 731–748 (GMPWLSATTVRTITHANA) traverse the membrane as a discontinuously helical segment. Residues 749 to 771 (LTVVGKSAVPGERAHIVEVKEQR) are Cytoplasmic-facing. 2 helical membrane passes run 772–792 (LSGLLVAVLIGVSILMEPILK) and 793–811 (YIPLAVLFGIFLYMGVTSL). The Cytoplasmic segment spans residues 812-849 (FGIQLFDRILLLLMPPKYHPKEPYVTRVKTWRITSSPL). The discontinuously helical intramembrane region spans 850–880 (TQILVVALLWGVKVSPASLRCPFVLVLTVPL). Over 881 to 922 (RRLLLPRIFSEIELKCLDTDDAVVTFEEAEGQDVYNEVQMPS) the chain is Cytoplasmic.

Belongs to the anion exchanger (TC 2.A.31) family. In terms of assembly, a dimer in solution, it spans the membrane asymmetrically and appears to be tetrameric. Erythrocytes.

It is found in the cell membrane. The protein resides in the basolateral cell membrane. It carries out the reaction hydrogencarbonate(in) + chloride(out) = hydrogencarbonate(out) + chloride(in). In terms of biological role, functions both as a transporter that mediates electroneutral anion exchange across the cell membrane and as a structural protein. Major integral membrane glycoprotein of the erythrocyte membrane; required for normal flexibility and stability of the erythrocyte membrane and for normal erythrocyte shape via the interactions of its cytoplasmic domain with cytoskeletal proteins, glycolytic enzymes, and hemoglobin. Functions as a transporter that mediates the 1:1 exchange of inorganic anions across the erythrocyte membrane. Mediates chloride-bicarbonate exchange in the kidney, and is required for normal acidification of the urine. The chain is Band 3 anion transport protein (SLC4A1) from Gallus gallus (Chicken).